Here is a 465-residue protein sequence, read N- to C-terminus: Argininosuccinate lyase (465 aa).

Belongs to the lyase 1 family. Argininosuccinate lyase subfamily.

It localises to the cytoplasm. The catalysed reaction is 2-(N(omega)-L-arginino)succinate = fumarate + L-arginine. It participates in amino-acid biosynthesis; L-arginine biosynthesis; L-arginine from L-ornithine and carbamoyl phosphate: step 3/3. The protein is Argininosuccinate lyase of Methanosphaera stadtmanae (strain ATCC 43021 / DSM 3091 / JCM 11832 / MCB-3).